The sequence spans 129 residues: Small ribosomal subunit protein uS11 (129 aa).

This sequence belongs to the universal ribosomal protein uS11 family. In terms of assembly, part of the 30S ribosomal subunit. Interacts with proteins S7 and S18. Binds to IF-3.

Its function is as follows. Located on the platform of the 30S subunit, it bridges several disparate RNA helices of the 16S rRNA. Forms part of the Shine-Dalgarno cleft in the 70S ribosome. The polypeptide is Small ribosomal subunit protein uS11 (Hydrogenovibrio crunogenus (strain DSM 25203 / XCL-2) (Thiomicrospira crunogena)).